The following is a 144-amino-acid chain: Putative pre-16S rRNA nuclease (144 aa).

This sequence belongs to the YqgF nuclease family.

The protein localises to the cytoplasm. Could be a nuclease involved in processing of the 5'-end of pre-16S rRNA. The sequence is that of Putative pre-16S rRNA nuclease from Symbiobacterium thermophilum (strain DSM 24528 / JCM 14929 / IAM 14863 / T).